The primary structure comprises 597 residues: Arginine--tRNA ligase (597 aa).

The short motif at 125–135 (PNTNKPLHLGH) is the 'HIGH' region element.

The protein belongs to the class-I aminoacyl-tRNA synthetase family. As to quaternary structure, monomer.

It localises to the cytoplasm. The enzyme catalyses tRNA(Arg) + L-arginine + ATP = L-arginyl-tRNA(Arg) + AMP + diphosphate. This is Arginine--tRNA ligase from Bacteroides fragilis (strain YCH46).